Consider the following 207-residue polypeptide: LysM and putative peptidoglycan-binding domain-containing protein 2 (207 aa).

In terms of domain architecture, LysM spans 61–105 (IEHRLSPSDTLQGIALKYGVTMEQIKRANKLFSTDCIFLRKSLNI). The interval 186-207 (AQRLKEEDLRHDDSYATCSYQH) is disordered. Over residues 188–199 (RLKEEDLRHDDS) the composition is skewed to basic and acidic residues.

This Xenopus tropicalis (Western clawed frog) protein is LysM and putative peptidoglycan-binding domain-containing protein 2 (lysmd2).